A 430-amino-acid polypeptide reads, in one-letter code: Acetyl-CoA acetyltransferase FG05087, mitochondrial (430 aa).

The N-terminal 32 residues, 1–32 (MTVTQLRSAGRLAQLAGHVNGARQFSTRPALR), are a transit peptide targeting the mitochondrion. Cysteine 122 (acyl-thioester intermediate) is an active-site residue. Tyrosine 217 serves as a coordination point for K(+). Lysine 260 is a CoA binding site. Residue alanine 278 coordinates K(+). CoA is bound at residue serine 282. Residues histidine 385 and cysteine 413 each act as proton acceptor in the active site. Asparagine 414 is a chloride binding site.

Belongs to the thiolase-like superfamily. Thiolase family. As to quaternary structure, homotetramer. K(+) serves as cofactor.

The protein localises to the mitochondrion. The catalysed reaction is 2 acetyl-CoA = acetoacetyl-CoA + CoA. Its function is as follows. Mitochondrial acetyl-CoA acetyltransferase that catalyzes both the formation and degradation of acetoacetyl-CoA. Seems not to be involved in ergosterol biosynthesis. Plays an important role in growth, morphogenesis and maintaining mitochondrial function including the response to oxidative stresses. The polypeptide is Acetyl-CoA acetyltransferase FG05087, mitochondrial (Gibberella zeae (strain ATCC MYA-4620 / CBS 123657 / FGSC 9075 / NRRL 31084 / PH-1) (Wheat head blight fungus)).